We begin with the raw amino-acid sequence, 287 residues long: ATP synthase gamma chain (287 aa).

The protein belongs to the ATPase gamma chain family. As to quaternary structure, F-type ATPases have 2 components, CF(1) - the catalytic core - and CF(0) - the membrane proton channel. CF(1) has five subunits: alpha(3), beta(3), gamma(1), delta(1), epsilon(1). CF(0) has three main subunits: a, b and c.

The protein resides in the cell inner membrane. Its function is as follows. Produces ATP from ADP in the presence of a proton gradient across the membrane. The gamma chain is believed to be important in regulating ATPase activity and the flow of protons through the CF(0) complex. The polypeptide is ATP synthase gamma chain (Sodalis glossinidius (strain morsitans)).